A 433-amino-acid polypeptide reads, in one-letter code: MTARSIKLFFARWKYLMFACCITYLLVIYAPISKSEQKDWKEGEIELSNDHELDVPILQKEELKPQQRPSFEENVPKKKTFNFNPVGKEPFDVEEVLTSSDIKLEERMTATVIPGQKRLILSWNAGHSQDNLQGCPDWNCEFTQVRARAPDADAVLIAHMDNDFVPKPNQYVVYFSQESPANSGIQIPRPDYINMTLGFRHDTPAGSPYGYTVKLGAKSRKTGQVVDANLVNGKAKGAAWFVSHCQTNSKREDFVKKLQKHLQIDIYGGCGPMKCARGDSKCDTMLDTDYHFYVTFENSICEDYVTEKLWKSGYQNTIIPLVLKRKLVEPFVPPNSFIAIDDFKSVKEMGDYLNYLMNNKTAYMEYFEWRHDYKVVFLDGSHHDVLERPWGFCQVCRMAWTEPRQKVLIPNWDAYWRQTCEKDGTLVDSIPLD.

Residues 1 to 12 (MTARSIKLFFAR) are Cytoplasmic-facing. A helical; Signal-anchor for type II membrane protein transmembrane segment spans residues 13-32 (WKYLMFACCITYLLVIYAPI). The Lumenal segment spans residues 33-433 (SKSEQKDWKE…GTLVDSIPLD (401 aa)). N194 and N359 each carry an N-linked (GlcNAc...) asparagine glycan.

This sequence belongs to the glycosyltransferase 10 family. Mg(2+) is required as a cofactor. The cofactor is Mn(2+). N-glycosylated. Glycosylation is important for enzymatic activity. Expressed in the pharyngeal-intestinal (PI) and anal valves. Expressed in ASG neurons and in one or two neurons in the retrovesicular ganglion and two neurons posterior to the PI valve and PHA and PHB neurons in the tail.

The protein resides in the golgi apparatus. Its subcellular location is the golgi stack membrane. The catalysed reaction is N(4)-{beta-D-GlcNAc-(1-&gt;2)-alpha-D-Man-(1-&gt;3)-[beta-D-GlcNAc-(1-&gt;2)-alpha-D-Man-(1-&gt;6)]-beta-D-Man-(1-&gt;4)-beta-D-GlcNAc-(1-&gt;4)-beta-D-GlcNAc}-L-asparaginyl-[protein] + GDP-beta-L-fucose = N(4)-{beta-D-GlcNAc-(1-&gt;2)-alpha-D-Man-(1-&gt;3)-[beta-D-GlcNAc-(1-&gt;2)-alpha-D-Man-(1-&gt;6)]-beta-D-Man-(1-&gt;4)-beta-D-GlcNAc-(1-&gt;4)-[alpha-L-Fuc(1-&gt;3)]-beta-D-GlcNAc}-L-asparaginyl-[protein] + GDP + H(+). It participates in protein modification; protein glycosylation. With respect to regulation, inhibited by Cu(2+) or Zn(2+) and to a lesser extent Ni(2+) ions. Preferentially catalyzes the addition of fucose in alpha 1-3 linkage to the first GlcNAc residue (with or without alpha 1,6-linked fucose), next to the peptide chains in N-glycans. Unlike in mammals, does not require the prior action of N-acetylglucosaminyltransferase I to generate complex N-glycans. In Caenorhabditis elegans, this protein is Alpha-(1,3)-fucosyltransferase fut-1.